Here is a 62-residue protein sequence, read N- to C-terminus: uncharacterized protein (62 aa).

This is an uncharacterized protein from Caenorhabditis elegans.